We begin with the raw amino-acid sequence, 1171 residues long: MSLRFVIGRAGSGKSTLCLHEVQEELKQRPRGETILYLVPEQMTFQTQQALIGSEDVRGSIRAQVFSFSRLAWKVLQEVGGASRLHIDEAGVHMLLRKIVESRKDGLSVFQKAAEQNGFFEHLGSMIAEFKRYNVTPSNVYEMWQQLDAHSSSAEQKLLANKVYDLQLLYDDFERALIGKYLDSEDYLQLLVEKLPQSEYVKGAEVYIDGFHSFSPQELEIVRQLMICGARVTITLTIDEKTLAQPVNELDLFYETTLTYEKIKQVAREEKIEIEKTIPLMEQPRFHSPALAHLEMHYEARPNEKFHGEASVTIHTAANLRAEVEGVAREIRRLVAEENYRYRDIAVLLRNGESYYDVMRTLFTDYNIPHFIDEKRPMSHHPLVECIRSALEIISGNWRYDAVFRCVKTELLYPLDVRKETMREEMDEFENYCLAYGVQGKRWTSEDPWMYRRYRSLDDTNGMITDSEREMEEKINRLRDVVRTPVIRMQKRLKRAGTVMQMCEAVYLFLEELDVPKKLEALRIRAEENGDFLFATDHEQVWEEVMSLLDTFVEMLGEEKMSLSMFTDVMSTGLEALQFANIPPSLDQVLIANIDRSRLSNVKATFVIGVNEGVIPAAPMDEGMLSDEERDVLSAAGIELAPTTRQTLLEEQFVMYQMVTRATEKLYISCPLADEEGKTLLASSFIKKIKRMFPDVKDTFITNDVNDLSRLEQISYVATPEVTLSYVMQQLQTWKRYGFEGNLDFWWDVYNFYVTSDEWKQKSSRVLSSLFYRNRAQKLSTAVSRDLYGDKIKGSVSRMELFNRCAYAHFAQHGLSLRERDIFKLDAPDIGELFHAALKRIADRLLRENRTWADLSIKECEHLSAVVIEEIAPLLQRQILLSSNRHFYLKQKLQQIIFRTSIILREHAKSSGFVPVDLEVPFGMGGTGSLPPMEFSLPNGVKMEVVGRIDRVDKAEDENGTFLRIIDYKSSSKALDLTEVYYGLALQMLTYLDVVTSNAQTWMKKGGTASPAGVLYFHIHNPIVEVKGDASEAEIEKEILKKFKMKGLVLGDADVVRLMDNKLSTGSSDIISAGLKKDGSFSARSSIASEQEFNVLQKYVHHTFENIGKDITEGVIDIAPYKKGNKAACTFCNFKSVCQFDESLEDNQFRTLKDMKDSEAMEKIREEVGGE.

In terms of domain architecture, UvrD-like helicase ATP-binding spans Met1 to Arg343. Residue Gly8–Ser15 coordinates ATP. Residues Met281–Asp587 enclose the UvrD-like helicase C-terminal domain. Residues Cys805, Cys1129, Cys1132, and Cys1138 each coordinate [4Fe-4S] cluster.

The protein belongs to the helicase family. AddB/RexB type 1 subfamily. In terms of assembly, heterodimer of AddA and AddB. Mg(2+) is required as a cofactor. The cofactor is [4Fe-4S] cluster.

Functionally, the heterodimer acts as both an ATP-dependent DNA helicase and an ATP-dependent, dual-direction single-stranded exonuclease. Recognizes the chi site generating a DNA molecule suitable for the initiation of homologous recombination. The AddB subunit has 5' -&gt; 3' nuclease activity but not helicase activity. This Bacillus anthracis protein is ATP-dependent helicase/deoxyribonuclease subunit B.